Consider the following 339-residue polypeptide: Glucokinase (339 aa).

ATP is bound at residue 16–21; that stretch reads GDIGGT.

This sequence belongs to the bacterial glucokinase family.

It localises to the cytoplasm. It carries out the reaction D-glucose + ATP = D-glucose 6-phosphate + ADP + H(+). This is Glucokinase from Sinorhizobium medicae (strain WSM419) (Ensifer medicae).